Consider the following 169-residue polypeptide: Protein Flattop homolog (169 aa).

Positions 53 to 169 (IPRSSRSPWG…SPKLATPEPC (117 aa)) are disordered. Positions 119-130 (VQASPRNASPLQ) are enriched in polar residues.

It belongs to the Flattop family.

The protein resides in the cytoplasm. It localises to the cytoskeleton. The protein localises to the cilium basal body. It is found in the cell projection. Its subcellular location is the cilium. The protein resides in the apical cell membrane. Functionally, acts as a regulator of cilium basal body docking and positioning in mono- and multiciliated cells. In Nematostella vectensis (Starlet sea anemone), this protein is Protein Flattop homolog.